A 163-amino-acid chain; its full sequence is Ribonuclease P protein component 4 (163 aa).

The Zn(2+) site is built by C66, C69, C96, and C99. Positions G110–D163 are disordered. Gly residues predominate over residues Q152–D163.

The protein belongs to the eukaryotic/archaeal RNase P protein component 4 family. As to quaternary structure, consists of a catalytic RNA component and at least 4-5 protein subunits. The cofactor is Zn(2+).

The protein resides in the cytoplasm. It catalyses the reaction Endonucleolytic cleavage of RNA, removing 5'-extranucleotides from tRNA precursor.. In terms of biological role, part of ribonuclease P, a protein complex that generates mature tRNA molecules by cleaving their 5'-ends. The polypeptide is Ribonuclease P protein component 4 (Aeropyrum pernix (strain ATCC 700893 / DSM 11879 / JCM 9820 / NBRC 100138 / K1)).